The primary structure comprises 380 residues: Variant-surface-glycoprotein phospholipase C (380 aa).

Residues 31–205 (ITQVCFVGSH…SRRRIFLVVG (175 aa)) form the PI-PLC X-box domain.

In terms of assembly, monomer.

The protein localises to the membrane. It carries out the reaction a 6-(alpha-D-glucosaminyl)-1-(1,2-diacyl-sn-glycero-3-phospho)-1D-myo-inositol = 6-(alpha-D-glucosaminyl)-1D-myo-inositol 1,2-cyclic phosphate + a 1,2-diacyl-sn-glycerol. Functionally, by hydrolysis of the attached glycolipid, releases soluble variant surface glycoprotein containing phosphoinositol from the cell wall of T.brucei after cell lysis. It also cleaves similar membrane anchors on some mammalian proteins. VSG lipase may play a role in processes such as parasite differentiation or antigenic variation. The protein is Variant-surface-glycoprotein phospholipase C of Trypanosoma cruzi.